Reading from the N-terminus, the 297-residue chain is 4-hydroxy-tetrahydrodipicolinate synthase (297 aa).

Thr47 serves as a coordination point for pyruvate. Tyr136 (proton donor/acceptor) is an active-site residue. Catalysis depends on Lys165, which acts as the Schiff-base intermediate with substrate. Thr206 is a pyruvate binding site.

It belongs to the DapA family. Homotetramer; dimer of dimers.

The protein resides in the cytoplasm. It catalyses the reaction L-aspartate 4-semialdehyde + pyruvate = (2S,4S)-4-hydroxy-2,3,4,5-tetrahydrodipicolinate + H2O + H(+). It participates in amino-acid biosynthesis; L-lysine biosynthesis via DAP pathway; (S)-tetrahydrodipicolinate from L-aspartate: step 3/4. Functionally, catalyzes the condensation of (S)-aspartate-beta-semialdehyde [(S)-ASA] and pyruvate to 4-hydroxy-tetrahydrodipicolinate (HTPA). The polypeptide is 4-hydroxy-tetrahydrodipicolinate synthase (Sulfurovum sp. (strain NBC37-1)).